The sequence spans 73 residues: Large ribosomal subunit protein bL31 (73 aa).

The protein belongs to the bacterial ribosomal protein bL31 family. Type A subfamily. In terms of assembly, part of the 50S ribosomal subunit.

Binds the 23S rRNA. The sequence is that of Large ribosomal subunit protein bL31 from Allorhizobium ampelinum (strain ATCC BAA-846 / DSM 112012 / S4) (Agrobacterium vitis (strain S4)).